We begin with the raw amino-acid sequence, 418 residues long: MEYNPFHNGHLYHLTSARELVKPDYTIAVMSGNFCQRGEPAVIDKFARAEIALRMGVDVVLELPVVFATQDAGGFAFGAVCVLDATGVVTDVVFGSESNDIEFLQRVARILYEQPDEYQKFLHEELKKGYSFPNARKYALMRYFSMKGWNEEEVLKLEKSNDILGVEYIHSALKIGSNIRFHTIKRVGAEEKDTSFRGRFSSATAIRNLMREKRWEEVRDSLPEDSFEILMREINEGRGPVFLENMGDFLLSFFRLKNMDFFEKIHGFSEGLEKRFHVCARQTGSYRDFLECVKAKRFTFSRIRRLALFSVFEVNKEFVEKSNTKGPQYIRILGFTEKGREILSLMRKKAKLPIVTNMSLYRKVLEKTDLPVDKQLFLEQIDLDVKATNFYSMFFPSVEQRCGERDFSIHPIFLRTEM.

Residues glycine 95, asparagine 161, and arginine 186 each coordinate ATP.

The protein belongs to the TmcAL family.

The protein resides in the cytoplasm. The enzyme catalyses cytidine(34) in elongator tRNA(Met) + acetate + ATP = N(4)-acetylcytidine(34) in elongator tRNA(Met) + AMP + diphosphate. Its function is as follows. Catalyzes the formation of N(4)-acetylcytidine (ac(4)C) at the wobble position of elongator tRNA(Met), using acetate and ATP as substrates. First activates an acetate ion to form acetyladenylate (Ac-AMP) and then transfers the acetyl group to tRNA to form ac(4)C34. The polypeptide is tRNA(Met) cytidine acetate ligase (Thermotoga maritima (strain ATCC 43589 / DSM 3109 / JCM 10099 / NBRC 100826 / MSB8)).